Here is a 438-residue protein sequence, read N- to C-terminus: 3-phosphoshikimate 1-carboxyvinyltransferase (438 aa).

The 3-phosphoshikimate site is built by Lys-25, Ser-26, and Arg-30. Lys-25 provides a ligand contact to phosphoenolpyruvate. Phosphoenolpyruvate contacts are provided by Gly-99 and Arg-128. Residues Ser-173, Gln-175, Asp-325, and Lys-352 each contribute to the 3-phosphoshikimate site. Gln-175 lines the phosphoenolpyruvate pocket. Residue Asp-325 is the Proton acceptor of the active site. Positions 356 and 398 each coordinate phosphoenolpyruvate.

The protein belongs to the EPSP synthase family. Monomer.

It is found in the cytoplasm. It catalyses the reaction 3-phosphoshikimate + phosphoenolpyruvate = 5-O-(1-carboxyvinyl)-3-phosphoshikimate + phosphate. Its pathway is metabolic intermediate biosynthesis; chorismate biosynthesis; chorismate from D-erythrose 4-phosphate and phosphoenolpyruvate: step 6/7. Its function is as follows. Catalyzes the transfer of the enolpyruvyl moiety of phosphoenolpyruvate (PEP) to the 5-hydroxyl of shikimate-3-phosphate (S3P) to produce enolpyruvyl shikimate-3-phosphate and inorganic phosphate. This is 3-phosphoshikimate 1-carboxyvinyltransferase from Prochlorococcus marinus subsp. pastoris (strain CCMP1986 / NIES-2087 / MED4).